Reading from the N-terminus, the 375-residue chain is Alpha-1,2-galactosyltransferase (375 aa).

The Cytoplasmic portion of the chain corresponds to 1–2 (MR). A helical; Signal-anchor for type II membrane protein transmembrane segment spans residues 3 to 23 (FAPYLISAVVITTIILGGAWW). Residues 24-375 (TSAMDTKLQT…HIQNLLKPSS (352 aa)) are Lumenal-facing.

It belongs to the glycosyltransferase 34 family. In terms of processing, O-glycosylated.

The protein localises to the golgi apparatus membrane. Its function is as follows. Involved in the O- and N-linked oligosaccharide modification of proteins transported through the Golgi stack. This occurs in cis Golgi where the enzyme transfers galactose from UDP-galactose to a variety of mannose based acceptors. This is Alpha-1,2-galactosyltransferase (gma12) from Schizosaccharomyces pombe (strain 972 / ATCC 24843) (Fission yeast).